A 281-amino-acid polypeptide reads, in one-letter code: 1-acyl-sn-glycerol-3-phosphate acyltransferase (281 aa).

3 helical membrane-spanning segments follow: residues isoleucine 40–leucine 60, leucine 71–isoleucine 91, and alanine 110–alanine 130. The HXXXXD motif motif lies at histidine 109–aspartate 114.

It belongs to the 1-acyl-sn-glycerol-3-phosphate acyltransferase family.

Its subcellular location is the membrane. The catalysed reaction is a 1-acyl-sn-glycero-3-phosphate + an acyl-CoA = a 1,2-diacyl-sn-glycero-3-phosphate + CoA. The protein operates within phospholipid metabolism; CDP-diacylglycerol biosynthesis; CDP-diacylglycerol from sn-glycerol 3-phosphate: step 2/3. Functionally, converts lysophosphatidic acid (LPA) into phosphatidic acid by incorporating acyl moiety at the 2 position. This enzyme uses erucoyl-CoA as an acyl donor. This chain is 1-acyl-sn-glycerol-3-phosphate acyltransferase, found in Limnanthes alba (White meadowfoam).